Here is a 330-residue protein sequence, read N- to C-terminus: DNA primase small subunit PriS (330 aa).

Active-site residues include aspartate 101 and aspartate 103. Zn(2+) contacts are provided by cysteine 116, cysteine 119, cysteine 128, and aspartate 131. Residue aspartate 235 is part of the active site.

This sequence belongs to the eukaryotic-type primase small subunit family. Heterodimer of a small subunit (PriS) and a large subunit (PriL). Mg(2+) is required as a cofactor. Mn(2+) serves as cofactor.

Functionally, catalytic subunit of DNA primase, an RNA polymerase that catalyzes the synthesis of short RNA molecules used as primers for DNA polymerase during DNA replication. The small subunit contains the primase catalytic core and has DNA synthesis activity on its own. Binding to the large subunit stabilizes and modulates the activity, increasing the rate of DNA synthesis while decreasing the length of the DNA fragments, and conferring RNA synthesis capability. The DNA polymerase activity may enable DNA primase to also catalyze primer extension after primer synthesis. May also play a role in DNA repair. The chain is DNA primase small subunit PriS from Saccharolobus islandicus (strain Y.N.15.51 / Yellowstone #2) (Sulfolobus islandicus).